The primary structure comprises 402 residues: Serine/threonine transporter SstT (402 aa).

The next 9 helical transmembrane spans lie at 19 to 39 (IGVVIGLFLGILVPKASAIGL), 43 to 63 (LFVGGLKAIAPLLVFTLVISA), 86 to 106 (TFAAALIAVVVNYIFPLTLIL), 138 to 158 (AITEANYMSILFWAVIFGLAM), 179 to 199 (VVKWIINLAPIGIMGLVFTSI), 212 to 232 (LLILVLVGTMLFVALVVNPII), 287 to 307 (IPLGAAINMAGAAITINILTL), 327 to 347 (VVAAVSACGASGVTGGSLLLI), and 354 to 374 (FGISNDVAMQVVGVGFIVGVI).

Belongs to the dicarboxylate/amino acid:cation symporter (DAACS) (TC 2.A.23) family.

The protein localises to the cell membrane. It carries out the reaction L-serine(in) + Na(+)(in) = L-serine(out) + Na(+)(out). The catalysed reaction is L-threonine(in) + Na(+)(in) = L-threonine(out) + Na(+)(out). Its function is as follows. Involved in the import of serine and threonine into the cell, with the concomitant import of sodium (symport system). The chain is Serine/threonine transporter SstT from Streptococcus agalactiae serotype III (strain NEM316).